A 468-amino-acid polypeptide reads, in one-letter code: 23S rRNA (uracil(1939)-C(5))-methyltransferase RlmD (468 aa).

The region spanning 12–70 (SKQLSPKLSLNVTQLDHLGAGMAQHQGKVVFIPQALPGERVSVQLTDQKKSFAKAKLIK) is the TRAM domain. Positions 83, 89, 92, and 174 each coordinate [4Fe-4S] cluster. 6 residues coordinate S-adenosyl-L-methionine: Q296, F325, N330, E351, D378, and D398. C424 serves as the catalytic Nucleophile.

The protein belongs to the class I-like SAM-binding methyltransferase superfamily. RNA M5U methyltransferase family. RlmD subfamily.

The catalysed reaction is uridine(1939) in 23S rRNA + S-adenosyl-L-methionine = 5-methyluridine(1939) in 23S rRNA + S-adenosyl-L-homocysteine + H(+). Catalyzes the formation of 5-methyl-uridine at position 1939 (m5U1939) in 23S rRNA. This Shewanella denitrificans (strain OS217 / ATCC BAA-1090 / DSM 15013) protein is 23S rRNA (uracil(1939)-C(5))-methyltransferase RlmD.